We begin with the raw amino-acid sequence, 143 residues long: Class I hydrophobin 20 (143 aa).

Positions 1 to 22 are cleaved as a signal peptide; sequence MLSHPMKLLFFVFALSALLAAA. Intrachain disulfides connect cysteine 54–cysteine 123, cysteine 62–cysteine 117, cysteine 63–cysteine 102, and cysteine 124–cysteine 137.

Belongs to the fungal hydrophobin family. In terms of assembly, self-assembles to form functional amyloid fibrils called rodlets. Self-assembly into fibrillar rodlets occurs spontaneously at hydrophobic:hydrophilic interfaces and the rodlets further associate laterally to form amphipathic monolayers.

The protein localises to the secreted. It is found in the cell wall. Its function is as follows. Aerial growth, conidiation, and dispersal of filamentous fungi in the environment rely upon a capability of their secreting small amphipathic proteins called hydrophobins (HPBs) with low sequence identity. Class I can self-assemble into an outermost layer of rodlet bundles on aerial cell surfaces, conferring cellular hydrophobicity that supports fungal growth, development and dispersal; whereas Class II form highly ordered films at water-air interfaces through intermolecular interactions but contribute nothing to the rodlet structure. Hydph20 is a class I hydrophobin involved in mycelial growth. The chain is Class I hydrophobin 20 from Pleurotus ostreatus (strain PC15) (Oyster mushroom).